The primary structure comprises 86 residues: Large ribosomal subunit protein uL10 (86 aa).

This sequence belongs to the universal ribosomal protein uL10 family. As to quaternary structure, part of the ribosomal stalk of the 50S ribosomal subunit. The N-terminus interacts with L11 and the large rRNA to form the base of the stalk. The C-terminus forms an elongated spine to which L12 dimers bind in a sequential fashion forming a multimeric L10(L12)X complex.

In terms of biological role, forms part of the ribosomal stalk, playing a central role in the interaction of the ribosome with GTP-bound translation factors. This is Large ribosomal subunit protein uL10 (rplJ) from Serratia marcescens.